A 170-amino-acid chain; its full sequence is Co-chaperone protein HscB homolog (170 aa).

In terms of domain architecture, J spans 5–79 (DHFSLFGLPA…RARYLCEQAG (75 aa)).

The protein belongs to the HscB family. Interacts with HscA and stimulates its ATPase activity.

In terms of biological role, co-chaperone involved in the maturation of iron-sulfur cluster-containing proteins. Seems to help targeting proteins to be folded toward HscA. This Bordetella petrii (strain ATCC BAA-461 / DSM 12804 / CCUG 43448) protein is Co-chaperone protein HscB homolog.